We begin with the raw amino-acid sequence, 411 residues long: Dual-specificity RNA methyltransferase RlmN (411 aa).

Glutamate 125 (proton acceptor) is an active-site residue. Residues 131–380 form the Radical SAM core domain; the sequence is EEGRGTLCIS…IRTPRGRDIL (250 aa). Cysteine 138 and cysteine 383 are disulfide-bonded. Positions 145, 149, and 152 each coordinate [4Fe-4S] cluster. Residues 209 to 210, serine 241, 263 to 265, and asparagine 340 contribute to the S-adenosyl-L-methionine site; these read GE and SLH. The active-site S-methylcysteine intermediate is the cysteine 383.

This sequence belongs to the radical SAM superfamily. RlmN family. The cofactor is [4Fe-4S] cluster.

It is found in the cytoplasm. The enzyme catalyses adenosine(2503) in 23S rRNA + 2 reduced [2Fe-2S]-[ferredoxin] + 2 S-adenosyl-L-methionine = 2-methyladenosine(2503) in 23S rRNA + 5'-deoxyadenosine + L-methionine + 2 oxidized [2Fe-2S]-[ferredoxin] + S-adenosyl-L-homocysteine. It carries out the reaction adenosine(37) in tRNA + 2 reduced [2Fe-2S]-[ferredoxin] + 2 S-adenosyl-L-methionine = 2-methyladenosine(37) in tRNA + 5'-deoxyadenosine + L-methionine + 2 oxidized [2Fe-2S]-[ferredoxin] + S-adenosyl-L-homocysteine. In terms of biological role, specifically methylates position 2 of adenine 2503 in 23S rRNA and position 2 of adenine 37 in tRNAs. m2A2503 modification seems to play a crucial role in the proofreading step occurring at the peptidyl transferase center and thus would serve to optimize ribosomal fidelity. The sequence is that of Dual-specificity RNA methyltransferase RlmN from Brucella suis biovar 1 (strain 1330).